We begin with the raw amino-acid sequence, 197 residues long: Protein jagunal (197 aa).

Residues 1–39 (MATRGGPMVAGTDGNDFEFRQRVAGTYQISLLNKSRLKY) lie on the Cytoplasmic side of the membrane. Residues 40 to 60 (CIFFHALLFFVMLAKLTSDIL) traverse the membrane as a helical segment. Over 61 to 78 (DHLDIFVLEIEELEVPPP) the chain is Lumenal. Residues 79–99 (LWWEYVWAASLLTSFLGLSAA) traverse the membrane as a helical segment. Residues 100–109 (RGNKVREMQK) lie on the Cytoplasmic side of the membrane. A helical transmembrane segment spans residues 110–130 (YMVAILLFAILPLFYCFAYYF). At 131-159 (SDVWEFATLDKSVELDETDIFVWRGYPYG) the chain is on the lumenal side. The helical transmembrane segment at 160–180 (VFWYAFCFVGFQVHGFTLYFA) threads the bilayer. Topologically, residues 181-197 (YNLVKAWKARTATRKFQ) are cytoplasmic.

It belongs to the jagunal family.

Its subcellular location is the endoplasmic reticulum membrane. Required for endoplasmic reticulum organization and proper vesicular traffic during vitellogenesis. Required for oocyte and bristle growth. This chain is Protein jagunal, found in Drosophila melanogaster (Fruit fly).